The following is a 56-amino-acid chain: Large ribosomal subunit protein bL32 (56 aa).

The tract at residues 1–37 (MAVQQNKKSRSKRGMRRSHDALSTAQLSVDATSGELH) is disordered. Over residues 7-16 (KKSRSKRGMR) the composition is skewed to basic residues. Polar residues predominate over residues 21 to 31 (ALSTAQLSVDA).

The protein belongs to the bacterial ribosomal protein bL32 family.

This chain is Large ribosomal subunit protein bL32, found in Shewanella loihica (strain ATCC BAA-1088 / PV-4).